The primary structure comprises 296 residues: Acetylglutamate kinase (296 aa).

Residues 69–70 (GG), R91, and N193 each bind substrate.

Belongs to the acetylglutamate kinase family. ArgB subfamily.

The protein localises to the cytoplasm. It carries out the reaction N-acetyl-L-glutamate + ATP = N-acetyl-L-glutamyl 5-phosphate + ADP. It functions in the pathway amino-acid biosynthesis; L-arginine biosynthesis; N(2)-acetyl-L-ornithine from L-glutamate: step 2/4. In terms of biological role, catalyzes the ATP-dependent phosphorylation of N-acetyl-L-glutamate. The protein is Acetylglutamate kinase of Delftia acidovorans (strain DSM 14801 / SPH-1).